The chain runs to 402 residues: uncharacterized protein (402 aa).

12 helical membrane passes run 23 to 43 (IVSV…PLAV), 52 to 72 (LGYG…ATLL), 90 to 110 (VLYG…SVAI), 121 to 141 (LLVG…AAIG), 158 to 178 (WNGI…VLLV), 180 to 200 (WLGL…GFAL), 228 to 248 (GMGL…ITLY), 255 to 275 (ANAV…RLLF), 282 to 302 (LGGF…LLLL), 309 to 329 (WVGL…FPAF), 351 to 371 (LFVD…ANLF), and 375 to 395 (SMFL…VALH).

It belongs to the major facilitator superfamily. YhhS family.

Its subcellular location is the cell inner membrane. This is an uncharacterized protein from Pseudomonas aeruginosa (strain ATCC 15692 / DSM 22644 / CIP 104116 / JCM 14847 / LMG 12228 / 1C / PRS 101 / PAO1).